Reading from the N-terminus, the 255-residue chain is Aliphatic sulfonates import ATP-binding protein SsuB (255 aa).

The ABC transporter domain maps to 12 to 233 (LLLNAVSKHY…RLGSVRLAEL (222 aa)). 44 to 51 (GRSGGGKS) serves as a coordination point for ATP.

It belongs to the ABC transporter superfamily. Aliphatic sulfonates importer (TC 3.A.1.17.2) family. The complex is composed of two ATP-binding proteins (SsuB), two transmembrane proteins (SsuC) and a solute-binding protein (SsuA).

The protein resides in the cell inner membrane. The catalysed reaction is ATP + H2O + aliphatic sulfonate-[sulfonate-binding protein]Side 1 = ADP + phosphate + aliphatic sulfonateSide 2 + [sulfonate-binding protein]Side 1.. Functionally, part of the ABC transporter complex SsuABC involved in aliphatic sulfonates import. Responsible for energy coupling to the transport system. This Escherichia coli O1:K1 / APEC protein is Aliphatic sulfonates import ATP-binding protein SsuB.